Consider the following 202-residue polypeptide: MDYFPVIFSLLFVAFQGAPETAVLGAELSPRAEKEVQSPPPSTSWRPRRSKRCSCSSLMDKECVYFCHLDIIWVNTPERVVPYGLGSPSRSKRSLKDLLPTKTTDQGNRCQCAHQKDKKCWNFCQADKELRAQSTMQKGVKDFKKGKPCPKLGKKCIYQQLVEGRKLRRLEAISNSIKTSFRVAKLKAELYRDQKLIHNRAH.

The N-terminal stretch at 1–25 (MDYFPVIFSLLFVAFQGAPETAVLG) is a signal peptide. Residues 26-50 (AELSPRAEKEVQSPPPSTSWRPRRS) constitute a propeptide that is removed on maturation. A disordered region spans residues 28–47 (LSPRAEKEVQSPPPSTSWRP). 2 disulfide bridges follow: Cys-53–Cys-67 and Cys-55–Cys-63. A propeptide spanning residues 74–202 (VNTPERVVPY…DQKLIHNRAH (129 aa)) is cleaved from the precursor. The segment at 110-124 (CQCAHQKDKKCWNFC) is endothelin-like.

Belongs to the endothelin/sarafotoxin family.

It is found in the secreted. Functionally, endothelins are endothelium-derived vasoconstrictor peptides. Probable ligand for G-protein coupled receptors EDNRA and EDNRB which activates PTK2B, BCAR1, BCAR3 and, GTPases RAP1 and RHOA cascade in glomerular mesangial cells. Also binds the DEAR/FBXW7-AS1 receptor. Promotes mesenteric arterial wall remodeling via activation of ROCK signaling and subsequent colocalization of NFATC3 with F-actin filaments. NFATC3 then translocates to the nucleus where it subsequently promotes the transcription of the smooth muscle hypertrophy and differentiation marker ACTA2. The chain is Endothelin-1 (Edn1) from Rattus norvegicus (Rat).